Here is a 274-residue protein sequence, read N- to C-terminus: Transmembrane O-methyltransferase (274 aa).

The chain crosses the membrane as a helical span at residues Val-14–Val-34. S-adenosyl-L-methionine-binding positions include Glu-120, Gly-122–Thr-123, Ser-128, Glu-146, and Ser-176.

The protein belongs to the class I-like SAM-binding methyltransferase superfamily. Cation-dependent O-methyltransferase family. Interacts with LHFPL5, PCDH15, TMC1, TMC2 and TMIE. Interacts directly with TMC1. The interaction of TOMT with TMC1 and TMC2 is required for the transportation of TMC1/2 into the stereocilia of hair cells.

It localises to the membrane. The protein localises to the cytoplasm. Its subcellular location is the endoplasmic reticulum. It catalyses the reaction a catechol + S-adenosyl-L-methionine = a guaiacol + S-adenosyl-L-homocysteine + H(+). In terms of biological role, catalyzes the O-methylation, and thereby the inactivation, of catecholamine neurotransmitters and catechol hormones. Required for auditory function. Component of the cochlear hair cell's mechanotransduction (MET) machinery. Involved in the assembly of the asymmetric tip-link MET complex. Required for transportation of TMC1 and TMC2 proteins into the mechanically sensitive stereocilia of the hair cells. The function in MET is independent of the enzymatic activity. In Propithecus coquereli (Coquerel's sifaka), this protein is Transmembrane O-methyltransferase.